Here is a 490-residue protein sequence, read N- to C-terminus: GDP-fucose protein O-fucosyltransferase 2 (490 aa).

Residues 1–25 form the signal peptide; the sequence is MRGSWPRLGFPALLLLLHLLTGSDA. Residues N29 and N79 are each glycosylated (N-linked (GlcNAc...) asparagine). 81-85 provides a ligand contact to GDP-beta-L-fucose; that stretch reads SEGFN. E82 (proton acceptor) is an active-site residue. The cysteines at positions 203 and 226 are disulfide-linked. Position 336–338 (336–338) interacts with GDP-beta-L-fucose; sequence HLR. N368 carries N-linked (GlcNAc...) asparagine glycosylation. Residues D418 and 435 to 436 contribute to the GDP-beta-L-fucose site; that span reads TF. C459 and C466 form a disulfide bridge.

Belongs to the glycosyltransferase 68 family.

It localises to the endoplasmic reticulum. It is found in the golgi apparatus. It catalyses the reaction L-seryl-[protein] + GDP-beta-L-fucose = 3-O-(alpha-L-fucosyl)-L-seryl-[protein] + GDP + H(+). The catalysed reaction is L-threonyl-[protein] + GDP-beta-L-fucose = 3-O-(alpha-L-fucosyl)-L-threonyl-[protein] + GDP + H(+). Its pathway is protein modification; protein glycosylation. Its activity is regulated as follows. Does not require divalent metal ions for optimal activity. Catalyzes the reaction that attaches fucose through an O-glycosidic linkage to a conserved serine or threonine residue in the consensus sequence C1-X-X-S/T-C2 of thrombospondin type I repeats (TSRs) where C1 and C2 are the first and second cysteines of the repeat, respectively. O-fucosylates members of several protein families including the ADAMTS, the thrombospondin (TSP) and spondin families. The sequence is that of GDP-fucose protein O-fucosyltransferase 2 from Drosophila melanogaster (Fruit fly).